The following is a 292-amino-acid chain: 4-hydroxy-tetrahydrodipicolinate synthase (292 aa).

Thr-45 contributes to the pyruvate binding site. Residue Tyr-133 is the Proton donor/acceptor of the active site. The Schiff-base intermediate with substrate role is filled by Lys-161. Ile-203 contributes to the pyruvate binding site.

Belongs to the DapA family. Homotetramer; dimer of dimers.

It localises to the cytoplasm. The catalysed reaction is L-aspartate 4-semialdehyde + pyruvate = (2S,4S)-4-hydroxy-2,3,4,5-tetrahydrodipicolinate + H2O + H(+). It participates in amino-acid biosynthesis; L-lysine biosynthesis via DAP pathway; (S)-tetrahydrodipicolinate from L-aspartate: step 3/4. Functionally, catalyzes the condensation of (S)-aspartate-beta-semialdehyde [(S)-ASA] and pyruvate to 4-hydroxy-tetrahydrodipicolinate (HTPA). The polypeptide is 4-hydroxy-tetrahydrodipicolinate synthase (Shigella boydii serotype 18 (strain CDC 3083-94 / BS512)).